Reading from the N-terminus, the 325-residue chain is Heat-inducible transcription repressor HrcA (325 aa).

Belongs to the HrcA family.

Negative regulator of class I heat shock genes (grpE-dnaK-dnaJ and groELS operons). Prevents heat-shock induction of these operons. This Staphylococcus aureus (strain MRSA252) protein is Heat-inducible transcription repressor HrcA.